The chain runs to 441 residues: Ribulose bisphosphate carboxylase large chain (441 aa).

Substrate contacts are provided by asparagine 89 and threonine 139. Catalysis depends on lysine 141, which acts as the Proton acceptor. Lysine 143 is a substrate binding site. Positions 167, 169, and 170 each coordinate Mg(2+). Lysine 167 carries the post-translational modification N6-carboxylysine. Histidine 260 (proton acceptor) is an active-site residue. Residues residue 261 and serine 345 each coordinate substrate.

Belongs to the RuBisCO large chain family. Type I subfamily. As to quaternary structure, heterohexadecamer of 8 large chains and 8 small chains; disulfide-linked. The disulfide link is formed within the large subunit homodimers. Requires Mg(2+) as cofactor. In terms of processing, the disulfide bond which can form in the large chain dimeric partners within the hexadecamer appears to be associated with oxidative stress and protein turnover.

Its subcellular location is the plastid. It localises to the chloroplast. The catalysed reaction is 2 (2R)-3-phosphoglycerate + 2 H(+) = D-ribulose 1,5-bisphosphate + CO2 + H2O. The enzyme catalyses D-ribulose 1,5-bisphosphate + O2 = 2-phosphoglycolate + (2R)-3-phosphoglycerate + 2 H(+). In terms of biological role, ruBisCO catalyzes two reactions: the carboxylation of D-ribulose 1,5-bisphosphate, the primary event in carbon dioxide fixation, as well as the oxidative fragmentation of the pentose substrate in the photorespiration process. Both reactions occur simultaneously and in competition at the same active site. The chain is Ribulose bisphosphate carboxylase large chain from Asclepias exaltata (Poke milkweed).